The chain runs to 1231 residues: Fanconi anemia group J protein homolog (1231 aa).

The Helicase ATP-binding domain maps to 11-448; it reads GGVKILFPCR…SDHEPLRAVC (438 aa). Residue 46–53 coordinates ATP; the sequence is SPTGSGKS. Disordered regions lie at residues 104 to 126 and 147 to 166; these read TFSS…GASS and QDDD…DEQL. Residues 152–166 show a composition bias toward basic and acidic residues; the sequence is QTDRKRIRQSHDEQL. The Nuclear localization signal motif lies at 155–173; it reads RKRIRQSHDEQLQARKRRC. Residues Cys291, Cys304, Cys316, and Cys356 each coordinate [4Fe-4S] cluster. Positions 399 to 402 match the DEAH box motif; sequence DEAH. Over residues 890–903 the composition is skewed to polar residues; the sequence is SKNQQQRMQMSSTN. Disordered regions lie at residues 890–924, 936–956, and 1195–1231; these read SKNQ…PTSS, VSEF…PPEI, and GNEN…FFLD. Low complexity-rich tracts occupy residues 909–924 and 940–954; these read SQGT…PTSS and TQPT…TSPP. A compositionally biased stretch (basic and acidic residues) spans 1206–1217; it reads KGTEQKNRENRL.

This sequence belongs to the DEAD box helicase family. DEAH subfamily. [4Fe-4S] cluster serves as cofactor.

The protein resides in the nucleus. It catalyses the reaction Couples ATP hydrolysis with the unwinding of duplex DNA at the replication fork by translocating in the 5'-3' direction. This creates two antiparallel DNA single strands (ssDNA). The leading ssDNA polymer is the template for DNA polymerase III holoenzyme which synthesizes a continuous strand.. The catalysed reaction is ATP + H2O = ADP + phosphate + H(+). Its function is as follows. DNA-dependent helicase and 5' to 3' DNA helicase required for the maintenance of chromosomal stability. Involved in the repair of DNA double-strand breaks by homologous recombination. Involved in the repair of abasic sites at replication forks by promoting the degradation of DNA-protein cross-links: acts by catalyzing unfolding of HMCES DNA-protein cross-link via its helicase activity, exposing the underlying DNA and enabling cleavage of the DNA-protein adduct by the SPRTN metalloprotease. This is Fanconi anemia group J protein homolog (brip1.L) from Xenopus laevis (African clawed frog).